A 703-amino-acid chain; its full sequence is UvrABC system protein B (703 aa).

One can recognise a Helicase ATP-binding domain in the interval 33-419 (ERIENGENDV…SDGVVEQIIR (387 aa)). 46–53 (GATGTGKT) contacts ATP. The Beta-hairpin signature appears at 99–122 (YYDYYQPEAYIPQTDTYIEKDSNI). Residues 436–589 (QIDDLLAEIK…QIAYNQEHGI (154 aa)) enclose the Helicase C-terminal domain. The 36-residue stretch at 659-694 (ADLIRQLSEQMHTAAEQLQFELAARLRDEIRDLKKE) folds into the UVR domain.

Belongs to the UvrB family. Forms a heterotetramer with UvrA during the search for lesions. Interacts with UvrC in an incision complex.

It is found in the cytoplasm. The UvrABC repair system catalyzes the recognition and processing of DNA lesions. A damage recognition complex composed of 2 UvrA and 2 UvrB subunits scans DNA for abnormalities. Upon binding of the UvrA(2)B(2) complex to a putative damaged site, the DNA wraps around one UvrB monomer. DNA wrap is dependent on ATP binding by UvrB and probably causes local melting of the DNA helix, facilitating insertion of UvrB beta-hairpin between the DNA strands. Then UvrB probes one DNA strand for the presence of a lesion. If a lesion is found the UvrA subunits dissociate and the UvrB-DNA preincision complex is formed. This complex is subsequently bound by UvrC and the second UvrB is released. If no lesion is found, the DNA wraps around the other UvrB subunit that will check the other stand for damage. This is UvrABC system protein B from Bifidobacterium longum (strain NCC 2705).